The chain runs to 390 residues: S-adenosylmethionine synthase 4 (390 aa).

Glu-9 serves as a coordination point for Mg(2+). Position 15 (His-15) interacts with ATP. Residue Glu-43 coordinates K(+). 2 residues coordinate L-methionine: Glu-56 and Gln-99. Residues 167 to 169, 235 to 238, Asp-246, 252 to 253, Ala-269, Lys-273, and Lys-277 each bind ATP; these read DGK, SGRF, and RK. Residue Asp-246 participates in L-methionine binding. L-methionine is bound at residue Lys-277.

It belongs to the AdoMet synthase family. Homotetramer. It depends on Mn(2+) as a cofactor. The cofactor is Mg(2+). Co(2+) serves as cofactor. K(+) is required as a cofactor.

It is found in the cytoplasm. The catalysed reaction is L-methionine + ATP + H2O = S-adenosyl-L-methionine + phosphate + diphosphate. It functions in the pathway amino-acid biosynthesis; S-adenosyl-L-methionine biosynthesis; S-adenosyl-L-methionine from L-methionine: step 1/1. Catalyzes the formation of S-adenosylmethionine from methionine and ATP. The reaction comprises two steps that are both catalyzed by the same enzyme: formation of S-adenosylmethionine (AdoMet) and triphosphate, and subsequent hydrolysis of the triphosphate. The chain is S-adenosylmethionine synthase 4 (METK4) from Populus trichocarpa (Western balsam poplar).